The sequence spans 463 residues: Asparagine--tRNA ligase (463 aa).

The protein belongs to the class-II aminoacyl-tRNA synthetase family. In terms of assembly, homodimer.

It is found in the cytoplasm. The catalysed reaction is tRNA(Asn) + L-asparagine + ATP = L-asparaginyl-tRNA(Asn) + AMP + diphosphate + H(+). The chain is Asparagine--tRNA ligase from Nostoc sp. (strain PCC 7120 / SAG 25.82 / UTEX 2576).